The following is a 429-amino-acid chain: Esterase/beta-lactamase LipL (429 aa).

Serine 88 (acyl-ester intermediate) is an active-site residue.

Belongs to the beta-lactamase family.

Its subcellular location is the secreted. The protein resides in the cell wall. It localises to the cell membrane. The catalysed reaction is a fatty acid ester + H2O = an aliphatic alcohol + a fatty acid + H(+). It carries out the reaction an acetyl ester + H2O = an aliphatic alcohol + acetate + H(+). The enzyme catalyses a butanoate ester + H2O = an aliphatic alcohol + butanoate + H(+). It catalyses the reaction an octanoate ester + H2O = an aliphatic alcohol + octanoate + H(+). The catalysed reaction is decanoate ester + H2O = decanoate + an aliphatic alcohol + H(+). It carries out the reaction a dodecanoate ester + H2O = an aliphatic alcohol + dodecanoate + H(+). The enzyme catalyses a tetradecanoate ester + H2O = an aliphatic alcohol + tetradecanoate + H(+). It catalyses the reaction hexadecanoate ester + H2O = an aliphatic alcohol + hexadecanoate + H(+). The catalysed reaction is octadecanoate ester + H2O = an aliphatic alcohol + octadecanoate + H(+). It carries out the reaction a hexanoate ester + H2O = an aliphatic alcohol + hexanoate + H(+). The enzyme catalyses a beta-lactam + H2O = a substituted beta-amino acid. Its activity is regulated as follows. Esterase and beta-lactamase activities are inhibited by the active site residue modifiers phenylmethanesulfonylflouride (PMSF) and diethylpyrocarbonate (DEPC). In terms of biological role, shows both esterase and beta-lactamase activities, with a much higher activity against phenyl esters than against beta-lactams. Shows esterase activity against both long-chain and short-chain p-nitrophenol (pNP) esters, with a preference for shorter chain esters. Hydrolyzes substrates containing beta-lactam ring such as nitrocefin and ampicillin. Functions as an immunogen that activates both humoral and cell-mediated responses. In Mycobacterium tuberculosis (strain ATCC 25618 / H37Rv), this protein is Esterase/beta-lactamase LipL.